The chain runs to 3122 residues: DNA polymerase zeta catalytic subunit (3122 aa).

Disordered regions lie at residues 270–289 (QRRRNRNESSQISQPESQDC), 425–457 (GYQGEKNRMPLPCHSFGESQNPQNSDDEENEPQ), 487–509 (LCRNAHRSSTEEDDSSSEEEMEW), 524–545 (LDGTADENSDNPLNNENSRAHS), and 842–886 (TSTK…TFEN). Residues 277 to 286 (ESSQISQPES) are compositionally biased toward polar residues. A compositionally biased stretch (acidic residues) spans 497–509 (EEDDSSSEEEMEW). Composition is skewed to polar residues over residues 533–545 (DNPLNNENSRAHS) and 842–860 (TSTKSTETGATKDSCTHND). At Ser-1029 the chain carries Phosphoserine. 7 disordered regions span residues 1034 to 1075 (YPIY…TLSF), 1154 to 1285 (VYNT…PTGI), 1429 to 1453 (VSVSEQSKTSETCSPGNAASEESQT), 1538 to 1616 (KAQS…LSDD), 1842 to 1869 (NDVLTPTPDSSPRSTSSPLQSKNGSFTP), 1959 to 1979 (NPRPGSPLRNGQAVVNKESSN), and 2091 to 2138 (AAVP…RHSS). The residue at position 1040 (Thr-1040) is a Phosphothreonine. Basic residues-rich tracts occupy residues 1042–1063 (KKSHRRKSKHKSAKKKPGKQHR) and 1166–1179 (KASRARAQVKKSKA). A compositionally biased stretch (basic and acidic residues) spans 1215–1239 (RANEKSLSRKHAIPADEKMKPHSEA). Positions 1243-1270 (PNHQSVSELTSSSGAQALSKQKEMSQTG) are enriched in polar residues. A compositionally biased stretch (low complexity) spans 1429-1440 (VSVSEQSKTSET). 2 stretches are compositionally biased toward polar residues: residues 1441 to 1453 (CSPGNAASEESQT) and 1538 to 1561 (KAQSTNVVQDSTSTHQPDKNISVS). Positions 1566–1587 (KANKRTRPVTSPRKPRTPRRTK) are enriched in basic residues. Residues 1588–1598 (PKEQTPRRLKV) are compositionally biased toward basic and acidic residues. Residues 1602-1615 (NLQTSGHLDNSLSD) show a composition bias toward polar residues. Residues 1844 to 1895 (VLTPTPDSSPRSTSSPLQSKNGSFTPRTAHILKPLMSPPSREEIVATLLDHD) form a mediates interaction with MAD2L2 region. Positions 1846–1859 (TPTPDSSPRSTSSP) are enriched in low complexity. Polar residues predominate over residues 1860-1869 (LQSKNGSFTP). At Ser-1964 the chain carries Phosphoserine. Zn(2+) contacts are provided by Cys-3034, Cys-3037, Cys-3046, and Cys-3049. Residues 3034 to 3049 (CPVCDDLTQHGICSKC) form a CysA-type zinc finger. 4 residues coordinate [4Fe-4S] cluster: Cys-3078, Cys-3081, Cys-3091, and Cys-3096. The short motif at 3078 to 3096 (CRNCTGSFDRHIPCVSLNC) is the CysB motif element.

It belongs to the DNA polymerase type-B family. As to quaternary structure, heterodimer with MAD2L2. This dimer forms the minimal DNA polymerase zeta complex (Pol-zeta2), with REV3L bearing DNA polymerase catalytic activity, although its activity is very low in this context. Component of the tetrameric Pol-zeta complex (Pol-zeta4), which consists of REV3L, MAD2L2, POLD2 and POLD3; Pol-zeta4 is the fully active form of DNA polymerase zeta. Requires [4Fe-4S] cluster as cofactor.

Its subcellular location is the nucleus. The catalysed reaction is DNA(n) + a 2'-deoxyribonucleoside 5'-triphosphate = DNA(n+1) + diphosphate. Its function is as follows. Catalytic subunit of the DNA polymerase zeta complex, an error-prone polymerase specialized in translesion DNA synthesis (TLS). Lacks an intrinsic 3'-5' exonuclease activity and thus has no proofreading function. The sequence is that of DNA polymerase zeta catalytic subunit (Rev3l) from Mus musculus (Mouse).